A 451-amino-acid polypeptide reads, in one-letter code: Phosphoglucosamine mutase (451 aa).

The active-site Phosphoserine intermediate is the Ser104. The Mg(2+) site is built by Ser104, Asp242, Asp244, and Asp246. Position 104 is a phosphoserine (Ser104).

Belongs to the phosphohexose mutase family. It depends on Mg(2+) as a cofactor. Activated by phosphorylation.

The enzyme catalyses alpha-D-glucosamine 1-phosphate = D-glucosamine 6-phosphate. Catalyzes the conversion of glucosamine-6-phosphate to glucosamine-1-phosphate. The sequence is that of Phosphoglucosamine mutase from Kocuria rhizophila (strain ATCC 9341 / DSM 348 / NBRC 103217 / DC2201).